The chain runs to 401 residues: S-adenosylmethionine synthase (401 aa).

His-16 provides a ligand contact to ATP. Asp-18 lines the Mg(2+) pocket. K(+) is bound at residue Glu-44. Residues Glu-57 and Gln-100 each contribute to the L-methionine site. The segment at 100 to 110 (QSPDIAQGVNE) is flexible loop. ATP is bound by residues 174-176 (DAK), 241-242 (RF), Asp-250, 256-257 (RK), Ala-273, and Lys-277. Asp-250 contacts L-methionine. Lys-281 contacts L-methionine.

It belongs to the AdoMet synthase family. In terms of assembly, homotetramer; dimer of dimers. Mg(2+) is required as a cofactor. Requires K(+) as cofactor.

Its subcellular location is the cytoplasm. The enzyme catalyses L-methionine + ATP + H2O = S-adenosyl-L-methionine + phosphate + diphosphate. Its pathway is amino-acid biosynthesis; S-adenosyl-L-methionine biosynthesis; S-adenosyl-L-methionine from L-methionine: step 1/1. Catalyzes the formation of S-adenosylmethionine (AdoMet) from methionine and ATP. The overall synthetic reaction is composed of two sequential steps, AdoMet formation and the subsequent tripolyphosphate hydrolysis which occurs prior to release of AdoMet from the enzyme. This is S-adenosylmethionine synthase from Streptococcus equi subsp. zooepidemicus (strain H70).